The following is a 1073-amino-acid chain: DNA-directed RNA polymerase subunit beta (1073 aa).

It belongs to the RNA polymerase beta chain family. In terms of assembly, in plastids the minimal PEP RNA polymerase catalytic core is composed of four subunits: alpha, beta, beta', and beta''. When a (nuclear-encoded) sigma factor is associated with the core the holoenzyme is formed, which can initiate transcription.

It localises to the plastid. The protein resides in the chloroplast. It carries out the reaction RNA(n) + a ribonucleoside 5'-triphosphate = RNA(n+1) + diphosphate. Its function is as follows. DNA-dependent RNA polymerase catalyzes the transcription of DNA into RNA using the four ribonucleoside triphosphates as substrates. This is DNA-directed RNA polymerase subunit beta from Aethionema grandiflorum (Persian stone-cress).